The primary structure comprises 344 residues: Dihydroorotase (344 aa).

Residues His-13 and His-15 each coordinate Zn(2+). Substrate contacts are provided by residues 15 to 17 (HVR) and Asn-41. The Zn(2+) site is built by Lys-99, His-136, and His-174. N6-carboxylysine is present on Lys-99. Residue His-136 participates in substrate binding. A substrate-binding site is contributed by Leu-219. Asp-247 contributes to the Zn(2+) binding site. The active site involves Asp-247. Substrate-binding residues include His-251 and Ala-263.

The protein belongs to the metallo-dependent hydrolases superfamily. DHOase family. Class II DHOase subfamily. Homodimer. It depends on Zn(2+) as a cofactor.

The enzyme catalyses (S)-dihydroorotate + H2O = N-carbamoyl-L-aspartate + H(+). It participates in pyrimidine metabolism; UMP biosynthesis via de novo pathway; (S)-dihydroorotate from bicarbonate: step 3/3. Functionally, catalyzes the reversible cyclization of carbamoyl aspartate to dihydroorotate. The protein is Dihydroorotase of Azoarcus sp. (strain BH72).